The sequence spans 102 residues: Small ribosomal subunit protein uS10 (102 aa).

The segment at 34–61 is disordered; the sequence is MAGPIPLPTKTLKVTTRKSTDGEGSSSF.

This sequence belongs to the universal ribosomal protein uS10 family. As to quaternary structure, part of the 30S ribosomal subunit.

Its function is as follows. Involved in the binding of tRNA to the ribosomes. This chain is Small ribosomal subunit protein uS10, found in Methanococcus aeolicus (strain ATCC BAA-1280 / DSM 17508 / OCM 812 / Nankai-3).